The sequence spans 327 residues: D-alanine--D-alanine ligase (327 aa).

The ATP-grasp domain maps to 113–312 (KRLWMTHGLA…YEDFVMQVLA (200 aa)). 139–194 (VADLGLPLIVKPAREGSSIGLTKVIAADQMRAAFEKAAGLDADVIAETFIDGAELT) is a binding site for ATP. Mg(2+) is bound by residues D266, E279, and N281.

This sequence belongs to the D-alanine--D-alanine ligase family. Mg(2+) serves as cofactor. It depends on Mn(2+) as a cofactor.

The protein resides in the cytoplasm. It carries out the reaction 2 D-alanine + ATP = D-alanyl-D-alanine + ADP + phosphate + H(+). Its pathway is cell wall biogenesis; peptidoglycan biosynthesis. Its function is as follows. Cell wall formation. This chain is D-alanine--D-alanine ligase, found in Cupriavidus metallidurans (strain ATCC 43123 / DSM 2839 / NBRC 102507 / CH34) (Ralstonia metallidurans).